The chain runs to 1305 residues: Junctional cadherin 5-associated protein (1305 aa).

7 disordered regions span residues 13-86 (YKLS…PSTA), 120-151 (REQE…VGGR), 249-419 (GVPK…HTTA), 450-545 (KLDG…CEMQ), 575-604 (IPVK…EQSV), 616-795 (ALTG…SRQL), and 818-1005 (FNKE…GLSA). Basic and acidic residues-rich tracts occupy residues 21–31 (APHEDDGERRQ), 69–82 (PESR…HGER), 120–129 (REQEAREDPG), and 140–151 (HPREGPWEVGGR). Pro residues predominate over residues 337–358 (GLEPPVYVPPPSYKSPPQPAAH). Residues 360–369 (CPEEAVSRHE) are compositionally biased toward basic and acidic residues. Composition is skewed to polar residues over residues 530-545 (LVSS…CEMQ) and 579-594 (SESQ…NDLK). Residues 595 to 604 (QSASLQEQSV) are compositionally biased toward low complexity. The span at 669-683 (QQTQTSFAHEPQSLQ) shows a compositional bias: polar residues. Positions 729-748 (SPKSQGSLSPSSNSAFSGSS) are enriched in low complexity. Position 841 is a phosphoserine (serine 841). Basic and acidic residues-rich tracts occupy residues 878-889 (SKSESWSEEGRP) and 945-958 (AKPE…EQRE). A phosphoserine mark is found at serine 1004, serine 1010, serine 1152, and serine 1239. Disordered regions lie at residues 1062-1166 (GAQR…DVET) and 1234-1305 (SRAA…VERV). The segment covering 1276–1288 (ADGHPAARRENGG) has biased composition (basic and acidic residues).

Its subcellular location is the cell junction. The protein localises to the adherens junction. In Bos taurus (Bovine), this protein is Junctional cadherin 5-associated protein (JCAD).